A 472-amino-acid polypeptide reads, in one-letter code: MASPPRCSPTAHDRECKLPPPSAPASEYCPGKLSWGTMARALGRFKLSIPHTHLLATLDPLALDREPPPHLLPEKHQVPEKLIWGDQDPLSKIPFKILSGHEHAVSTCHFCVDDTKLLSGSYDCTVKLWDPVDGSVVRDFEHRPKAPVVECSITGDSSRVIAASYDKTVRAWDLETGKLLWKVRYDTFIVSCKFSPDGKYVVSGFDVDHGICIMDAENITTVSVIKDHHTRSITSCCFDPDSQRVASVSLDRCIKIWDVTSQATLLTITKAHSNAISNCCFTFSGHFLCTSSWDKNLKIWNVHTGEFRNCGACVTLMQGHEGSVSSCHFARDSSFLISGGFDRTVAIWDVAEGYRKLSLKGHNDWVMDVAISNNKKWILSASKDRTMRLWNIEEIDEIPLVIKYKKAVGLKLKQCERCDRPFSIFKSDTSSEMFTQCVFCRIDTRGLPADTSSSSSSSERENSPPPRGSKDD.

The disordered stretch occupies residues 1–22 (MASPPRCSPTAHDRECKLPPPS). WD repeat units follow at residues 100-139 (GHEH…VVRD), 143-182 (RPKA…LLWK), 184-224 (RYDT…TVSV), 228-267 (HHTR…TLLT), 271-310 (AHSN…FRNC), 319-358 (GHEG…RKLS), and 361-400 (GHND…EIPL). The interval 447–472 (LPADTSSSSSSSERENSPPPRGSKDD) is disordered. A compositionally biased stretch (basic and acidic residues) spans 458–472 (SERENSPPPRGSKDD).

The protein is WD repeat-containing protein 88 (WDR88) of Homo sapiens (Human).